A 544-amino-acid chain; its full sequence is ATP-dependent RNA helicase HAS1 (544 aa).

Positions 1-10 (MSSTKPPTTT) are enriched in low complexity. The segment at 1–59 (MSSTKPPTTTNKRKRTSNAHDEAPAKRVPEASSSKVTLDDSQPAPATSSDAVLGARSAP) is disordered. A compositionally biased stretch (basic and acidic residues) spans 18-29 (NAHDEAPAKRVP). The segment covering 31 to 50 (ASSSKVTLDDSQPAPATSSD) has biased composition (polar residues). A Q motif motif is present at residues 66 to 94 (VPFSTLNLSPPTTAAIERMGFETMTEVQA). In terms of domain architecture, Helicase ATP-binding spans 97 to 273 (IPPLLAGKDV…RISLRPGPLY (177 aa)). 110-117 (ARTGSGKT) contributes to the ATP binding site. A DEAD box motif is present at residues 220-223 (DEAD). The region spanning 287-456 (MLEQGYVVCE…DVQKQLESLI (170 aa)) is the Helicase C-terminal domain. The Bipartite nuclear localization signal signature appears at 299–315 (QRFMLLFTFLKKNLKKK). The disordered stretch occupies residues 513-544 (GSVKAKKSRDEDESSDDDGQPKKAYYRNRGRK).

The protein belongs to the DEAD box helicase family. DDX18/HAS1 subfamily. As to quaternary structure, associates in the nucleolus with the 60S and pre-60S ribosomal subunits.

It localises to the nucleus. It is found in the nucleolus. It catalyses the reaction ATP + H2O = ADP + phosphate + H(+). ATP-dependent RNA helicase involved in 40S ribosomal subunit biogenesis. Required for the processing and cleavage of 35S pre-rRNA at sites A0, A1, and A2, leading to mature 18S rRNA. The protein is ATP-dependent RNA helicase HAS1 (HAS1) of Cryptococcus neoformans var. neoformans serotype D (strain JEC21 / ATCC MYA-565) (Filobasidiella neoformans).